Reading from the N-terminus, the 2089-residue chain is Mediator of DNA damage checkpoint protein 1 (2089 aa).

A compositionally biased stretch (acidic residues) spans 1–19; sequence MEDTQAIDWDVEEEEETEQ. Positions 1–22 are disordered; the sequence is MEDTQAIDWDVEEEEETEQSSE. Residues 1 to 150 form an interaction with CHEK2 region; the sequence is MEDTQAIDWD…SRGPLTVEET (150 aa). The interaction with the MRN complex stretch occupies residues 2–220; sequence EDTQAIDWDV…PFAFNLNSDT (219 aa). Thr4 carries the phosphothreonine; by ATM modification. An FHA domain is found at 54-105; the sequence is NVVGRMPDCSVALPFPSISKQHAEIEILAWDKAPILRDCGSLNGTQILRPPK. Ser108 is subject to Phosphoserine. The segment at 145–568 is required for nuclear localization (NLS1); the sequence is LTVEETPRVQ…PAKLLVVSLE (424 aa). Thr146 is subject to Phosphothreonine. Ser168 carries the phosphoserine; by CK2 modification. Residue Ser176 is modified to Phosphoserine. Disordered regions lie at residues 185–248, 261–280, and 286–317; these read RTTS…AKQS, DQPL…GAGN, and GVIL…AEVH. Phosphoserine; by CK2 occurs at positions 196 and 218. Residue Thr220 is modified to Phosphothreonine; by CK2. Positions 261-274 are enriched in basic and acidic residues; sequence DQPLVKERDNDTKV. Ser299 carries the phosphoserine; by CK2 modification. Residue Thr301 is modified to Phosphothreonine; by CK2. Residues 306–317 are compositionally biased toward basic and acidic residues; the sequence is DSRPPGRPAEVH. Residue Ser329 is modified to Phosphoserine; by CK2. Phosphothreonine; by CK2 is present on Thr331. Position 372 is a phosphoserine (Ser372). At Ser376 the chain carries Phosphoserine; by CK2. Position 378 is a phosphothreonine; by CK2 (Thr378). A phosphoserine mark is found at Ser394 and Ser397. Ser402 is subject to Phosphoserine; by CK2. At Thr404 the chain carries Phosphothreonine; by CK2. Ser411 carries the post-translational modification Phosphoserine. The residue at position 449 (Thr449) is a Phosphothreonine. A Phosphoserine; by CK2 modification is found at Ser453. A Phosphothreonine; by CK2 modification is found at Thr455. Residues 482–515 are disordered; the sequence is RAHSEKDQPPFGDSDDSVEADKSSPGIHLERSQA. Ser485, Ser495, Ser498, Ser504, Ser505, and Ser513 each carry phosphoserine. Thr523 is subject to Phosphothreonine. Residue Ser590 is modified to Phosphoserine. Residue Lys616 forms a Glycyl lysine isopeptide (Lys-Gly) (interchain with G-Cter in SUMO1); alternate linkage. Lys616 is covalently cross-linked (Glycyl lysine isopeptide (Lys-Gly) (interchain with G-Cter in SUMO2); alternate). Disordered stretches follow at residues 653-689 and 780-1887; these read DTLG…DNYG and SPPR…TKLN. A compositionally biased stretch (basic and acidic residues) spans 671-685; sequence GREREQHVGGTKDSE. Residues Ser780 and Ser793 each carry the phosphoserine modification. Position 812 is an N6-acetyllysine (Lys812). Basic and acidic residues-rich tracts occupy residues 819 to 844, 851 to 862, 868 to 905, and 914 to 951; these read ETAE…ERQT, ELTKGKQDREQK, DTQR…EKQV, and AFER…RGEP. Residues Ser955 and Ser998 each carry the phosphoserine modification. The span at 955-965 shows a compositional bias: polar residues; that stretch reads SQDQKGQASSP. Residues 1016–1031 show a composition bias toward basic and acidic residues; the sequence is KASRIRAAEKVSRGDQ. Ser1033 carries the post-translational modification Phosphoserine. Over residues 1040 to 1051 the composition is skewed to pro residues; the sequence is PTVPEAPAPPQK. A phosphoserine mark is found at Ser1068 and Ser1086. The span at 1103–1113 shows a compositional bias: basic residues; it reads PKPKIRTRKSS. Polar residues predominate over residues 1129–1156; sequence PSTSTAQPVTPKPTSQATRSRTNRSSVK. An interaction with the PRKDC complex region spans residues 1148–1610; sequence SRTNRSSVKT…TNRSSVKTPE (463 aa). Residue Thr1157 is modified to Phosphothreonine. Residues 1169-1187 are compositionally biased toward polar residues; the sequence is QPSTSTDQPVTSEPTSQVT. Thr1198 carries the phosphothreonine modification. Positions 1210-1228 are enriched in polar residues; that stretch reads QPSTSTDRPVTSEPTSQAT. Ser1235 is subject to Phosphoserine. Position 1239 is a phosphothreonine (Thr1239). Positions 1251 to 1268 are enriched in polar residues; it reads QPSTSTDQPVTSEPTYQA. 2 positions are modified to phosphothreonine: Thr1280 and Thr1302. 2 stretches are compositionally biased toward low complexity: residues 1304-1318 and 1347-1359; these read KPTS…NMSS and TSRT…NMSS. Residues 1375–1391 show a composition bias toward polar residues; the sequence is PSTSTEQPVTPEPTSRA. Ser1399 and Ser1400 each carry phosphoserine. N6-acetyllysine is present on Lys1402. Thr1403 is subject to Phosphothreonine. Lys1413 participates in a covalent cross-link: Glycyl lysine isopeptide (Lys-Gly) (interchain with G-Cter in SUMO1); alternate. Lys1413 participates in a covalent cross-link: Glycyl lysine isopeptide (Lys-Gly) (interchain with G-Cter in SUMO2); alternate. Composition is skewed to polar residues over residues 1416–1444, 1456–1475, 1498–1514, and 1538–1555; these read PSTS…SVKT, QPST…QATR, ASAS…TSRT, and QPST…TSRA. Phosphothreonine is present on residues Thr1425 and Thr1466. Position 1548 is a phosphothreonine (Thr1548). Ser1564 carries the phosphoserine modification. Residues Thr1567 and Thr1589 each carry the phosphothreonine modification. Residues 1579–1596 show a composition bias toward polar residues; it reads QPSTSRNQLVTPEPTSRA. A Phosphoserine modification is found at Ser1604. The residue at position 1608 (Thr1608) is a Phosphothreonine. Pro residues predominate over residues 1611–1620; it reads PVVPTAPEPH. Polar residues predominate over residues 1624 to 1636; sequence STDQPVTPKLTSR. Phosphothreonine is present on residues Thr1630, Thr1664, and Thr1671. The span at 1678–1689 shows a compositional bias: polar residues; it reads GGQSKTLRSSTV. Ser1681 bears the Phosphoserine mark. The residue at position 1697 (Thr1697) is a Phosphothreonine. The segment covering 1698–1719 has biased composition (polar residues); it reads PEFQSPVTTDQPISPEPITQPS. Positions 1698-2089 are required for nuclear localization (NLS2); that stretch reads PEFQSPVTTD…VLSPLEMSST (392 aa). 2 positions are modified to phosphoserine: Ser1702 and Ser1711. Residue Lys1740 forms a Glycyl lysine isopeptide (Lys-Gly) (interchain with G-Cter in SUMO2) linkage. Ser1775 bears the Phosphoserine mark. Lys1790 participates in a covalent cross-link: Glycyl lysine isopeptide (Lys-Gly) (interchain with G-Cter in SUMO2). At Thr1800 the chain carries Phosphothreonine. Position 1820 is a phosphoserine (Ser1820). Residues 1823–1836 are compositionally biased toward polar residues; it reads HQKQPQRGEVSQKT. Residue Lys1840 forms a Glycyl lysine isopeptide (Lys-Gly) (interchain with G-Cter in SUMO1); alternate linkage. Lys1840 participates in a covalent cross-link: Glycyl lysine isopeptide (Lys-Gly) (interchain with G-Cter in SUMO2); alternate. Residues 1847 to 1857 are compositionally biased toward basic and acidic residues; that stretch reads AEKPGKEEDVV. Residue Thr1858 is modified to Phosphothreonine. BRCT domains follow at residues 1892-1970 and 1991-2082; these read APKV…EYVV and RERR…FVLS. Residue Arg1943 is modified to Omega-N-methylarginine.

In terms of assembly, homodimer. Interacts with H2AX, which requires phosphorylation of H2AX on 'Ser-139'. Interacts with the MRN complex, composed of MRE11, RAD50, and NBN. Interacts with CHEK2, which requires ATM-mediated phosphorylation of 'Thr-68' within the FHA domain of CHEK2. Interacts constitutively with the BRCA1-BARD1 complex, SMC1A and TP53BP1. Interacts with ATM and FANCD2, and these interactions are reduced upon DNA damage. Also interacts with the PRKDC complex, composed of XRCC6/KU70, XRCC5/KU80 and PRKDC/XRCC7. This interaction may be required for PRKDC autophosphorylation, which is essential for DNA double strand break (DSB) repair. When phosphorylated by ATM, interacts with RNF8 (via FHA domain). Interacts with CEP164. When phosphorylated, interacts with APTX (via FHA-like domain). Interacts (when phosphorylated) with TOPBP1; promoting TOPBP1 localization to DNA damage sites during mitosis. Interacts (when phosphorylated) with NBN; promoting NBN and MRN complex localization to DNA damage sites. In terms of processing, phosphorylated upon exposure to ionizing radiation (IR), ultraviolet radiation (UV), and hydroxyurea (HU). Phosphorylation in response to IR requires ATM, NBN, and possibly CHEK2. Also phosphorylated during the G2/M phase of the cell cycle and during activation of the mitotic spindle checkpoint. Phosphorylation at Thr-4 by ATM stabilizes and enhances homodimerization via the FHA domain. Phosphorylated at Ser-168 and Ser-196 by CK2 in response to DNA damage during mitosis, promoting interaction with TOPBP1. Phosphorylated by CK2 in response to DNA damage, promoting interaction with NBN and recruitment of the MRN complex to DNA damage sites. Sumoylation at Lys-1840 by PIAS4 following DNA damage promotes ubiquitin-mediated degradation. Post-translationally, ubiquitinated by RNF4, leading to proteasomal degradation; undergoes 'Lys-48'-linked polyubiquitination. As to expression, highly expressed in testis.

It is found in the nucleus. The protein resides in the chromosome. In terms of biological role, histone reader protein required for checkpoint-mediated cell cycle arrest in response to DNA damage within both the S phase and G2/M phases of the cell cycle. Specifically recognizes and binds histone H2AX phosphorylated at 'Ser-139', a marker of DNA damage, serving as a scaffold for the recruitment of DNA repair and signal transduction proteins to discrete foci of DNA damage sites. Also required for downstream events subsequent to the recruitment of these proteins. These include phosphorylation and activation of the ATM, CHEK1 and CHEK2 kinases, and stabilization of TP53/p53 and apoptosis. ATM and CHEK2 may also be activated independently by a parallel pathway mediated by TP53BP1. Required for chromosomal stability during mitosis by promoting recruitment of TOPBP1 to DNA double strand breaks (DSBs): TOPBP1 forms filamentous assemblies that bridge MDC1 and tether broken chromosomes during mitosis. Required for the repair of DSBs via homologous recombination by promoting recruitment of NBN component of the MRN complex to DSBs. The chain is Mediator of DNA damage checkpoint protein 1 from Homo sapiens (Human).